A 445-amino-acid chain; its full sequence is UDP-N-acetylmuramoylalanine--D-glutamate ligase (445 aa).

ATP is bound at residue 118 to 124; the sequence is GTNGKTT.

The protein belongs to the MurCDEF family.

Its subcellular location is the cytoplasm. It carries out the reaction UDP-N-acetyl-alpha-D-muramoyl-L-alanine + D-glutamate + ATP = UDP-N-acetyl-alpha-D-muramoyl-L-alanyl-D-glutamate + ADP + phosphate + H(+). It participates in cell wall biogenesis; peptidoglycan biosynthesis. Its function is as follows. Cell wall formation. Catalyzes the addition of glutamate to the nucleotide precursor UDP-N-acetylmuramoyl-L-alanine (UMA). The chain is UDP-N-acetylmuramoylalanine--D-glutamate ligase from Macrococcus caseolyticus (strain JCSC5402) (Macrococcoides caseolyticum).